The following is a 552-amino-acid chain: HTH-type transcriptional regulator SgrR (552 aa).

The HTH marR-type domain maps to 1 to 116; it reads MPSARLQQQF…LVSHLGRSFR (116 aa). Positions 26-49 form a DNA-binding region, H-T-H motif; it reads LNELAALLSCSRRHMRTLLNTMQD. The interval 163–492 is solute-binding; that stretch reads ELEADIAHHW…IDWQADAARW (330 aa).

Activates the small RNA gene sgrS under glucose-phosphate stress conditions as well as yfdZ. Represses its own transcription under both stress and non-stress conditions. Might act as a sensor of the intracellular accumulation of phosphoglucose by binding these molecules in its C-terminal solute-binding domain. In Shigella dysenteriae serotype 1 (strain Sd197), this protein is HTH-type transcriptional regulator SgrR.